We begin with the raw amino-acid sequence, 246 residues long: tRNA pseudouridine synthase A (246 aa).

Residue aspartate 52 is the Nucleophile of the active site. Residue tyrosine 111 participates in substrate binding.

It belongs to the tRNA pseudouridine synthase TruA family. Homodimer.

The catalysed reaction is uridine(38/39/40) in tRNA = pseudouridine(38/39/40) in tRNA. Functionally, formation of pseudouridine at positions 38, 39 and 40 in the anticodon stem and loop of transfer RNAs. In Borrelia garinii subsp. bavariensis (strain ATCC BAA-2496 / DSM 23469 / PBi) (Borreliella bavariensis), this protein is tRNA pseudouridine synthase A.